We begin with the raw amino-acid sequence, 537 residues long: Tyrosine-protein kinase Yes (537 aa).

The span at 1 to 22 (MGCIKSKEDKGPSIKYRTEPKP) shows a compositional bias: basic and acidic residues. The tract at residues 1-60 (MGCIKSKEDKGPSIKYRTEPKPDPGSQYGADPTQATQSPGIKGPAPNFNSHSMTPFGGSS) is disordered. Glycine 2 carries the N-myristoyl glycine lipid modification. Cysteine 3 carries the S-palmitoyl cysteine; in membrane form lipid modification. Positions 85-146 (GGVTVFVALY…PSNYVAPADS (62 aa)) constitute an SH3 domain. Positions 152-249 (WYFGKMGRKD…GLCYRLTTVC (98 aa)) constitute an SH2 domain. The 254-residue stretch at 271 to 524 (LRLDVKLGQG…YIQSFLEDYF (254 aa)) folds into the Protein kinase domain. ATP-binding positions include 277 to 285 (LGQGCFGEV) and lysine 299. Aspartate 390 functions as the Proton acceptor in the catalytic mechanism. Tyrosine 420 is subject to Phosphotyrosine; by autocatalysis. At tyrosine 531 the chain carries Phosphotyrosine; by CSK.

This sequence belongs to the protein kinase superfamily. Tyr protein kinase family. SRC subfamily. Post-translationally, autophosphorylated at Tyr-420 inducing activation. In terms of processing, palmitoylation at Cys-3 promotes membrane localization.

It is found in the cell membrane. The protein resides in the cytoplasm. The protein localises to the cytoskeleton. Its subcellular location is the microtubule organizing center. It localises to the centrosome. It is found in the cytosol. The protein resides in the cell junction. The catalysed reaction is L-tyrosyl-[protein] + ATP = O-phospho-L-tyrosyl-[protein] + ADP + H(+). Non-receptor protein tyrosine kinase that is involved in the regulation of cell growth and survival, apoptosis, cell-cell adhesion, cytoskeleton remodeling, differentiation, G2/M progression and cytokinesis. This Xenopus laevis (African clawed frog) protein is Tyrosine-protein kinase Yes (yes1).